A 511-amino-acid chain; its full sequence is Probable cytochrome P450 4d21 (511 aa).

Cys456 is a heme binding site.

This sequence belongs to the cytochrome P450 family. It depends on heme as a cofactor.

Its subcellular location is the endoplasmic reticulum membrane. It is found in the microsome membrane. Functionally, may be involved in the metabolism of insect hormones and in the breakdown of synthetic insecticides. This chain is Probable cytochrome P450 4d21 (Cyp4d21), found in Drosophila melanogaster (Fruit fly).